Reading from the N-terminus, the 246-residue chain is ATP synthase subunit a (246 aa).

The next 5 membrane-spanning stretches (helical) occupy residues glycine 34–glycine 54, tryptophan 92–leucine 112, aspartate 130–leucine 150, phenylalanine 155–phenylalanine 175, and valine 196–phenylalanine 216.

This sequence belongs to the ATPase A chain family. As to quaternary structure, F-type ATPases have 2 components, CF(1) - the catalytic core - and CF(0) - the membrane proton channel. CF(1) has five subunits: alpha(3), beta(3), gamma(1), delta(1), epsilon(1). CF(0) has four main subunits: a, b, b' and c.

It localises to the cell inner membrane. In terms of biological role, key component of the proton channel; it plays a direct role in the translocation of protons across the membrane. The chain is ATP synthase subunit a from Gloeobacter violaceus (strain ATCC 29082 / PCC 7421).